A 1433-amino-acid chain; its full sequence is DNA polymerase III PolC-type (1433 aa).

The Exonuclease domain maps to 419–575; sequence FVVFDVETTG…YDAEATGHLL (157 aa).

Belongs to the DNA polymerase type-C family. PolC subfamily.

The protein localises to the cytoplasm. It catalyses the reaction DNA(n) + a 2'-deoxyribonucleoside 5'-triphosphate = DNA(n+1) + diphosphate. Required for replicative DNA synthesis. This DNA polymerase also exhibits 3' to 5' exonuclease activity. The sequence is that of DNA polymerase III PolC-type from Halalkalibacterium halodurans (strain ATCC BAA-125 / DSM 18197 / FERM 7344 / JCM 9153 / C-125) (Bacillus halodurans).